Here is a 422-residue protein sequence, read N- to C-terminus: Probable metallocarboxypeptidase A (422 aa).

The first 17 residues, 1–17, serve as a signal peptide directing secretion; it reads MRSVLSLALLAANVVTA. Residues 18-112 constitute a propeptide, activation peptide; that stretch reads AVVAPFDYSG…FEAYSAGYAP (95 aa). Positions 119–419 constitute a Peptidase M14 domain; the sequence is SYHSYQDHLS…AGTVAMLKAV (301 aa). The Zn(2+) site is built by His179 and Glu182. Residues 179-182, Arg237, and 254-255 contribute to the substrate site; these read HARE and NR. Cys248 and Cys271 are joined by a disulfide. Zn(2+) is bound at residue His309. 310 to 311 is a substrate binding site; sequence SY. Glu385 serves as the catalytic Proton donor/acceptor.

The protein belongs to the peptidase M14 family. The cofactor is Zn(2+).

It is found in the secreted. In terms of biological role, extracellular metalloprotease that contributes to pathogenicity. In Arthroderma benhamiae (strain ATCC MYA-4681 / CBS 112371) (Trichophyton mentagrophytes), this protein is Probable metallocarboxypeptidase A (MCPA).